Consider the following 157-residue polypeptide: Large ribosomal subunit protein eL21 (157 aa).

The disordered stretch occupies residues 110-132; sequence QANDQAKAEGNKAGKRVSTKRNP.

Belongs to the eukaryotic ribosomal protein eL21 family.

The chain is Large ribosomal subunit protein eL21 (RPL21) from Tetrahymena thermophila (strain SB210).